The chain runs to 89 residues: Probable spanin, outer lipoprotein subunit (89 aa).

The span at 1 to 10 (MPPCSATSRR) shows a compositional bias: polar residues. Residues 1-21 (MPPCSATSRRSLPGPTPSARR) form a disordered region. Residues 1–47 (MPPCSATSRRSLPGPTPSARRWTVPWTRTARGLTGLCLLLSLTACAT) form the signal peptide.

Interacts (via C-terminus) with the spanin inner membrane subunit (via C-terminus). Part of the spanin complex which spans the entire periplasmic space. The spanin complex is composed of spanin inner membrane subunit and spanin outer membrane subunit.

The protein localises to the host cell outer membrane. Component of the spanin complex that disrupts the host outer membrane and participates in cell lysis during virus exit. The spanin complex conducts the final step in host lysis by disrupting the outer membrane after holin and endolysin action have permeabilized the inner membrane and degraded the host peptidoglycans. Host outer membrane disruption is possibly due to local fusion between the inner and outer membrane performed by the spanin complex. This is Probable spanin, outer lipoprotein subunit from Pseudomonas aeruginosa.